The chain runs to 366 residues: GDSL esterase/lipase LTL1 (366 aa).

Residues 1–27 (MNINCSPLGFLISLFFIVTFLAPQVKS) form the signal peptide. The active-site Nucleophile is Ser36. Asn117 carries N-linked (GlcNAc...) asparagine glycosylation. Residues Asp326 and His329 contribute to the active site. Residue Asn354 is glycosylated (N-linked (GlcNAc...) asparagine).

This sequence belongs to the 'GDSL' lipolytic enzyme family. As to quaternary structure, binds to VLG at the endomembrane system. In terms of tissue distribution, mostly expressed in flowers, reproductive stems and rosette leaves, and, to a lower extent, in roots.

It localises to the secreted. Its function is as follows. Involved in the mechanisms of salt tolerance. Mediates resistance to LiCl and NaCl. This Arabidopsis thaliana (Mouse-ear cress) protein is GDSL esterase/lipase LTL1.